Reading from the N-terminus, the 387-residue chain is NAD(P)H oxidoreductase RTN4IP1, mitochondrial (387 aa).

The transit peptide at 1 to 27 directs the protein to the mitochondrion; that stretch reads MLMCRRWLVCSLRCHYRSFSFSAARRT. Residues 38–379 form the Enoyl reductase (ER) domain; the sequence is GKNDVLRFTK…QGHARGKTVV (342 aa). 11 residues coordinate NADPH: serine 200, glycine 202, valine 203, serine 223, tyrosine 241, leucine 286, glycine 327, phenylalanine 329, histidine 372, alanine 373, and arginine 374.

The protein belongs to the zinc-containing alcohol dehydrogenase family. Quinone oxidoreductase subfamily.

The protein localises to the mitochondrion matrix. It is found in the mitochondrion outer membrane. The enzyme catalyses a 3-demethylubiquinone + NADH + 2 H(+) = a 3-demethylubiquinol + NAD(+). It catalyses the reaction a 3-demethylubiquinone + NADPH + 2 H(+) = a 3-demethylubiquinol + NADP(+). It carries out the reaction 3-demethylubiquinone-10 + NADH + 2 H(+) = 3-demethylubiquinol-10 + NAD(+). The catalysed reaction is 3-demethylubiquinone-10 + NADPH + 2 H(+) = 3-demethylubiquinol-10 + NADP(+). The protein operates within cofactor biosynthesis; ubiquinone biosynthesis. NAD(P)H oxidoreductase involved in the ubiquinone biosynthetic pathway. Required for the O-methyltransferase activity of COQ3. Able to catalyze the oxidoreduction of 3-demethylubiquinone into 3-demethylubiquinol in vitro. However, it is unclear if 3-demethylubiquinone constitutes a substrate in vivo. May also play a role in the regulation of retinal ganglion cell (RGC) neurite outgrowth, and hence in the development of the inner retina and optic nerve. This Danio rerio (Zebrafish) protein is NAD(P)H oxidoreductase RTN4IP1, mitochondrial (rtn4ip1).